The chain runs to 165 residues: Ribosome maturation factor RimM (165 aa).

The PRC barrel domain maps to 94–165; the sequence is EDEFYIADLT…YVILNYQREA (72 aa).

Belongs to the RimM family. In terms of assembly, binds ribosomal protein uS19.

It is found in the cytoplasm. Functionally, an accessory protein needed during the final step in the assembly of 30S ribosomal subunit, possibly for assembly of the head region. Essential for efficient processing of 16S rRNA. May be needed both before and after RbfA during the maturation of 16S rRNA. It has affinity for free ribosomal 30S subunits but not for 70S ribosomes. The sequence is that of Ribosome maturation factor RimM from Rickettsia rickettsii (strain Sheila Smith).